Consider the following 246-residue polypeptide: Uridylate kinase (246 aa).

Residue 11–14 (KLSG) coordinates ATP. Residue glycine 53 coordinates UMP. ATP contacts are provided by glycine 54 and arginine 58. UMP-binding positions include aspartate 73 and 134-141 (TGNPYFTT). Positions 161, 167, and 170 each coordinate ATP.

This sequence belongs to the UMP kinase family. As to quaternary structure, homohexamer.

Its subcellular location is the cytoplasm. The enzyme catalyses UMP + ATP = UDP + ADP. The protein operates within pyrimidine metabolism; CTP biosynthesis via de novo pathway; UDP from UMP (UMPK route): step 1/1. With respect to regulation, inhibited by UTP. Functionally, catalyzes the reversible phosphorylation of UMP to UDP. The sequence is that of Uridylate kinase from Leptospira borgpetersenii serovar Hardjo-bovis (strain JB197).